The sequence spans 282 residues: HTH-type transcriptional activator RhaR (282 aa).

Residues 179-277 (DKLITRLAAS…GMTPSQWRHL (99 aa)) form the HTH araC/xylS-type domain. DNA-binding regions (H-T-H motif) lie at residues 196–217 (DKFC…RQQT) and 244–267 (ISDI…TRET).

In terms of assembly, binds DNA as a dimer.

It localises to the cytoplasm. Its function is as follows. Activates expression of the rhaSR operon in response to L-rhamnose. This chain is HTH-type transcriptional activator RhaR, found in Escherichia coli (strain K12 / MC4100 / BW2952).